The following is a 187-amino-acid chain: Small ribosomal subunit protein uS7 (187 aa).

This sequence belongs to the universal ribosomal protein uS7 family. Part of the 30S ribosomal subunit.

Its function is as follows. One of the primary rRNA binding proteins, it binds directly to 16S rRNA where it nucleates assembly of the head domain of the 30S subunit. Is located at the subunit interface close to the decoding center. The chain is Small ribosomal subunit protein uS7 from Picrophilus torridus (strain ATCC 700027 / DSM 9790 / JCM 10055 / NBRC 100828 / KAW 2/3).